A 128-amino-acid chain; its full sequence is Small ribosomal subunit protein uS9 (128 aa).

The protein belongs to the universal ribosomal protein uS9 family.

In Flavobacterium psychrophilum (strain ATCC 49511 / DSM 21280 / CIP 103535 / JIP02/86), this protein is Small ribosomal subunit protein uS9.